The following is a 407-amino-acid chain: Peptidase T (407 aa).

His81 contacts Zn(2+). Asp83 is a catalytic residue. A Zn(2+)-binding site is contributed by Asp142. Catalysis depends on Glu176, which acts as the Proton acceptor. Zn(2+) contacts are provided by Glu177, Asp199, and His381.

Belongs to the peptidase M20B family. Zn(2+) is required as a cofactor.

It localises to the cytoplasm. It carries out the reaction Release of the N-terminal residue from a tripeptide.. Functionally, cleaves the N-terminal amino acid of tripeptides. The sequence is that of Peptidase T from Streptococcus pneumoniae (strain Hungary19A-6).